Here is a 244-residue protein sequence, read N- to C-terminus: Phosphoadenosine 5'-phosphosulfate reductase (244 aa).

The active-site Nucleophile; cysteine thiosulfonate intermediate is cysteine 239.

This sequence belongs to the PAPS reductase family. CysH subfamily.

It localises to the cytoplasm. The enzyme catalyses [thioredoxin]-disulfide + sulfite + adenosine 3',5'-bisphosphate + 2 H(+) = [thioredoxin]-dithiol + 3'-phosphoadenylyl sulfate. The protein operates within sulfur metabolism; hydrogen sulfide biosynthesis; sulfite from sulfate: step 3/3. In terms of biological role, catalyzes the formation of sulfite from phosphoadenosine 5'-phosphosulfate (PAPS) using thioredoxin as an electron donor. The polypeptide is Phosphoadenosine 5'-phosphosulfate reductase (Salmonella choleraesuis (strain SC-B67)).